Consider the following 324-residue polypeptide: tRNA pseudouridine synthase B (324 aa).

Asp-49 acts as the Nucleophile in catalysis.

The protein belongs to the pseudouridine synthase TruB family. Type 1 subfamily.

It carries out the reaction uridine(55) in tRNA = pseudouridine(55) in tRNA. Responsible for synthesis of pseudouridine from uracil-55 in the psi GC loop of transfer RNAs. In Tolumonas auensis (strain DSM 9187 / NBRC 110442 / TA 4), this protein is tRNA pseudouridine synthase B.